The chain runs to 906 residues: Protein translocase subunit SecA (906 aa).

ATP contacts are provided by residues glutamine 86, 104 to 108 (GEGKT), and aspartate 511. Composition is skewed to basic and acidic residues over residues 853 to 865 (HESVIDNNQRHDE) and 877 to 888 (VRREGPKVKRND). Positions 853–906 (HESVIDNNQRHDEDEQEEAPKVQQVRREGPKVKRNDPCPCGSGKKYKQCHGKVE) are disordered. Zn(2+) contacts are provided by cysteine 890, cysteine 892, cysteine 901, and histidine 902. A compositionally biased stretch (basic residues) spans 896–906 (KKYKQCHGKVE).

Belongs to the SecA family. As to quaternary structure, monomer and homodimer. Part of the essential Sec protein translocation apparatus which comprises SecA, SecYEG and auxiliary proteins SecDF-YajC and YidC. The cofactor is Zn(2+).

It localises to the cell inner membrane. Its subcellular location is the cytoplasm. It carries out the reaction ATP + H2O + cellular proteinSide 1 = ADP + phosphate + cellular proteinSide 2.. In terms of biological role, part of the Sec protein translocase complex. Interacts with the SecYEG preprotein conducting channel. Has a central role in coupling the hydrolysis of ATP to the transfer of proteins into and across the cell membrane, serving both as a receptor for the preprotein-SecB complex and as an ATP-driven molecular motor driving the stepwise translocation of polypeptide chains across the membrane. The chain is Protein translocase subunit SecA from Francisella tularensis subsp. holarctica (strain OSU18).